Here is a 453-residue protein sequence, read N- to C-terminus: MDDITQNLESVEKNPDIGMGRGVYISTYGCQMNVNDTERMYALLEMQNFVPVTDPKKASLIIINSCSVREKPVHKVYSEVGTYKYMKRKNPELKIGVGGCVGQQEKENLMKTQPMIDFVFGTDQIDSLPQLVAKSFAGERRLVNSRFEHRSPYHIETLVRNPGVATYVNITKGCDNFCTFCVVPYTRGREKSRPVQHILTDIRHLVKRGVKEVTLLGQNVNSYQGDEGIDFADLLAKVAKETDVERIRYTTSHPKDFNQKLVDVMAEHSNKIMEYIHLPFQAGSTKVLERMNRNYTREEYLERIAMIQKGLPNVCFSTDIIVGFPGETEEDFQDTLNMVTEVGFETIFAFSYSPRPFTKAAKFEDQLPEDVKNERLNRLFDVHEAMAFERVKRYEGTTMKVLVENVDRDHGKMQGRSTGNKLVHFLGTADLIGKTVDVKITKAFPAVFRGEMI.

Positions 21 to 137 (RGVYISTYGC…LPQLVAKSFA (117 aa)) constitute an MTTase N-terminal domain. 6 residues coordinate [4Fe-4S] cluster: C30, C66, C100, C174, C178, and C181. The region spanning 160–389 (RNPGVATYVN…FDVHEAMAFE (230 aa)) is the Radical SAM core domain. In terms of domain architecture, TRAM spans 392–453 (KRYEGTTMKV…FPAVFRGEMI (62 aa)).

Belongs to the methylthiotransferase family. MiaB subfamily. As to quaternary structure, monomer. The cofactor is [4Fe-4S] cluster.

It is found in the cytoplasm. It carries out the reaction N(6)-dimethylallyladenosine(37) in tRNA + (sulfur carrier)-SH + AH2 + 2 S-adenosyl-L-methionine = 2-methylsulfanyl-N(6)-dimethylallyladenosine(37) in tRNA + (sulfur carrier)-H + 5'-deoxyadenosine + L-methionine + A + S-adenosyl-L-homocysteine + 2 H(+). Functionally, catalyzes the methylthiolation of N6-(dimethylallyl)adenosine (i(6)A), leading to the formation of 2-methylthio-N6-(dimethylallyl)adenosine (ms(2)i(6)A) at position 37 in tRNAs that read codons beginning with uridine. This is tRNA-2-methylthio-N(6)-dimethylallyladenosine synthase from Bdellovibrio bacteriovorus (strain ATCC 15356 / DSM 50701 / NCIMB 9529 / HD100).